The following is a 256-amino-acid chain: MPIFYGTEVTSRLMLGTAQYPSPAILADAFRRSDAGIATVSVRREAGGDQAGQDFWGLIRDLGVAVLPNTAGCYSVREAVTTAQMARELFDTNWIKLEVIGHTDTLQPDPFGLVEAAAQLAEDGFEVFPYCTEDLVLCERLVEVGCKVLMPWGAPIGTGLGLNNIYGLRSLRAHFPDTPLVVDAGLGLPSHATQAMELGYDAVLLNTAVSKAGDPAAMAHAFALAVEAGALAAGADPMDARDMAAPSTPVFGKAML.

Lys96 serves as the catalytic Schiff-base intermediate with DXP. Residues Gly157, 184 to 185, and 206 to 207 contribute to the 1-deoxy-D-xylulose 5-phosphate site; these read AG and NT.

This sequence belongs to the ThiG family. As to quaternary structure, homotetramer. Forms heterodimers with either ThiH or ThiS.

The protein resides in the cytoplasm. The catalysed reaction is [ThiS sulfur-carrier protein]-C-terminal-Gly-aminoethanethioate + 2-iminoacetate + 1-deoxy-D-xylulose 5-phosphate = [ThiS sulfur-carrier protein]-C-terminal Gly-Gly + 2-[(2R,5Z)-2-carboxy-4-methylthiazol-5(2H)-ylidene]ethyl phosphate + 2 H2O + H(+). The protein operates within cofactor biosynthesis; thiamine diphosphate biosynthesis. Functionally, catalyzes the rearrangement of 1-deoxy-D-xylulose 5-phosphate (DXP) to produce the thiazole phosphate moiety of thiamine. Sulfur is provided by the thiocarboxylate moiety of the carrier protein ThiS. In vitro, sulfur can be provided by H(2)S. This is Thiazole synthase from Roseobacter denitrificans (strain ATCC 33942 / OCh 114) (Erythrobacter sp. (strain OCh 114)).